The chain runs to 955 residues: Villin-5 (955 aa).

Gelsolin-like repeat units follow at residues 29–111, 152–218, 274–339, and 644–712; these read FKPV…DKFL, VHVK…VEDG, LLHE…TVMF, and HFTQ…GSEP. Disordered regions lie at residues 741-783 and 801-895; these read KGGG…RVRV and NSRN…GLPV. The segment covering 756–776 has biased composition (polar residues); that stretch reads PTYSGRSTVQDKSQRSRSMSF. The span at 817–836 shows a compositional bias: low complexity; sequence PKSATPDSSSAPSKSSATAS. The segment covering 842 to 864 has biased composition (basic and acidic residues); sequence DRPKSVKDGSELEKPKQEEDAKE. Over residues 867 to 878 the composition is skewed to polar residues; it reads NTMTSRVESLTI. Residues 890–955 form the HP domain; that stretch reads DEGLPVYPYD…NRMKIALQLF (66 aa).

This sequence belongs to the villin/gelsolin family.

It localises to the cytoplasm. The protein localises to the cytoskeleton. Ca(2+)-regulated actin-binding protein. Binds actin microfilaments (MFs). Involved in actin filament bundling, severing and capping. Caps the barbed end of actin filaments and is able to sever them in a calcium-dependent manner. The protein is Villin-5 of Oryza sativa subsp. japonica (Rice).